The following is a 150-amino-acid chain: Deoxyuridine 5'-triphosphate nucleotidohydrolase (150 aa).

Substrate is bound by residues arginine 69–glycine 71, asparagine 82, leucine 86–aspartate 88, and lysine 96.

This sequence belongs to the dUTPase family. The cofactor is Mg(2+).

The catalysed reaction is dUTP + H2O = dUMP + diphosphate + H(+). The protein operates within pyrimidine metabolism; dUMP biosynthesis; dUMP from dCTP (dUTP route): step 2/2. This enzyme is involved in nucleotide metabolism: it produces dUMP, the immediate precursor of thymidine nucleotides and it decreases the intracellular concentration of dUTP so that uracil cannot be incorporated into DNA. The polypeptide is Deoxyuridine 5'-triphosphate nucleotidohydrolase (Neisseria gonorrhoeae (strain ATCC 700825 / FA 1090)).